We begin with the raw amino-acid sequence, 416 residues long: Serine hydroxymethyltransferase (416 aa).

(6S)-5,6,7,8-tetrahydrofolate-binding positions include Leu118 and 122–124; that span reads GHL. Residue Lys226 is modified to N6-(pyridoxal phosphate)lysine. Residues Glu242 and 350–352 contribute to the (6S)-5,6,7,8-tetrahydrofolate site; that span reads SPF.

It belongs to the SHMT family. In terms of assembly, homodimer. Requires pyridoxal 5'-phosphate as cofactor.

The protein localises to the cytoplasm. It catalyses the reaction (6R)-5,10-methylene-5,6,7,8-tetrahydrofolate + glycine + H2O = (6S)-5,6,7,8-tetrahydrofolate + L-serine. It functions in the pathway one-carbon metabolism; tetrahydrofolate interconversion. Its pathway is amino-acid biosynthesis; glycine biosynthesis; glycine from L-serine: step 1/1. Catalyzes the reversible interconversion of serine and glycine with tetrahydrofolate (THF) serving as the one-carbon carrier. This reaction serves as the major source of one-carbon groups required for the biosynthesis of purines, thymidylate, methionine, and other important biomolecules. Also exhibits THF-independent aldolase activity toward beta-hydroxyamino acids, producing glycine and aldehydes, via a retro-aldol mechanism. This chain is Serine hydroxymethyltransferase, found in Helicobacter hepaticus (strain ATCC 51449 / 3B1).